A 450-amino-acid polypeptide reads, in one-letter code: NADP-specific glutamate dehydrogenase (450 aa).

Lys111 is a catalytic residue.

This sequence belongs to the Glu/Leu/Phe/Val dehydrogenases family. In terms of assembly, homohexamer.

It carries out the reaction L-glutamate + NADP(+) + H2O = 2-oxoglutarate + NH4(+) + NADPH + H(+). The protein is NADP-specific glutamate dehydrogenase (GDHA) of Laccaria bicolor (strain S238N-H82 / ATCC MYA-4686) (Bicoloured deceiver).